The following is a 111-amino-acid chain: Ribonuclease P protein component (111 aa).

This sequence belongs to the RnpA family. In terms of assembly, consists of a catalytic RNA component (M1 or rnpB) and a protein subunit.

It catalyses the reaction Endonucleolytic cleavage of RNA, removing 5'-extranucleotides from tRNA precursor.. In terms of biological role, RNaseP catalyzes the removal of the 5'-leader sequence from pre-tRNA to produce the mature 5'-terminus. It can also cleave other RNA substrates such as 4.5S RNA. The protein component plays an auxiliary but essential role in vivo by binding to the 5'-leader sequence and broadening the substrate specificity of the ribozyme. In Alkaliphilus metalliredigens (strain QYMF), this protein is Ribonuclease P protein component.